Here is a 210-residue protein sequence, read N- to C-terminus: Large ribosomal subunit protein bL25 (210 aa).

Residues 179–210 form a disordered region; sequence LPPQQEEEIHSGEQQEPGHPDAEEGRETTPES. Basic and acidic residues predominate over residues 185 to 210; that stretch reads EEIHSGEQQEPGHPDAEEGRETTPES.

Belongs to the bacterial ribosomal protein bL25 family. CTC subfamily. Part of the 50S ribosomal subunit; part of the 5S rRNA/L5/L18/L25 subcomplex. Contacts the 5S rRNA. Binds to the 5S rRNA independently of L5 and L18.

Functionally, this is one of the proteins that binds to the 5S RNA in the ribosome where it forms part of the central protuberance. This chain is Large ribosomal subunit protein bL25, found in Geobacillus sp. (strain WCH70).